A 359-amino-acid chain; its full sequence is 5-amino-6-(D-ribitylamino)uracil--L-tyrosine 4-hydroxyphenyl transferase (359 aa).

Positions 45–282 (VTYVLNANIN…VYAISRIFFK (238 aa)) constitute a Radical SAM core domain. The [4Fe-4S] cluster site is built by C59, C63, and C66.

Belongs to the radical SAM superfamily. CofH family. In terms of assembly, consists of two subunits, CofG and CofH. Requires [4Fe-4S] cluster as cofactor.

The enzyme catalyses 5-amino-6-(D-ribitylamino)uracil + L-tyrosine + S-adenosyl-L-methionine = 5-amino-5-(4-hydroxybenzyl)-6-(D-ribitylimino)-5,6-dihydrouracil + 2-iminoacetate + 5'-deoxyadenosine + L-methionine + H(+). It functions in the pathway cofactor biosynthesis; coenzyme F0 biosynthesis. In terms of biological role, catalyzes the radical-mediated synthesis of 5-amino-5-(4-hydroxybenzyl)-6-(D-ribitylimino)-5,6-dihydrouracil from 5-amino-6-(D-ribitylamino)uracil and L-tyrosine. This chain is 5-amino-6-(D-ribitylamino)uracil--L-tyrosine 4-hydroxyphenyl transferase, found in Methanococcus vannielii (strain ATCC 35089 / DSM 1224 / JCM 13029 / OCM 148 / SB).